Reading from the N-terminus, the 593-residue chain is Tyrosine-protein phosphatase non-receptor type 11 (593 aa).

At threonine 2 the chain carries N-acetylthreonine. SH2 domains follow at residues 6 to 102 (WFHP…KYPL) and 112 to 216 (WFHG…KQPL). Phosphotyrosine occurs at positions 62 and 66. The 271-residue stretch at 247–517 (FWEEFETLQQ…EAQYRFIYMA (271 aa)) folds into the Tyrosine-protein phosphatase domain. Substrate is bound by residues aspartate 425, 459–465 (CSAGIGR), and glutamine 506. The active-site Phosphocysteine intermediate is the cysteine 459. Phosphotyrosine; by PDGFR occurs at positions 542 and 580.

The protein belongs to the protein-tyrosine phosphatase family. Non-receptor class 2 subfamily. As to quaternary structure, interacts with phosphorylated SIT1, LIME1, BCAR3 and MZPL1. Interacts with FCRL4, FCRL6, ANKHD1, SHB, INPP5D/SHIP1 and CD84. Interacts with MILR1 (tyrosine-phosphorylated). Interacts with FLT1 (tyrosine-phosphorylated), FLT3 (tyrosine-phosphorylated), FLT4 (tyrosine-phosphorylated), KIT and GRB2. Interacts with PTPNS1. Interacts with KIR2DL1; the interaction is enhanced by ARRB2. Interacts (via SH2 domain) with TEK/TIE2 (tyrosine phosphorylated). Interacts with GAB2. Interacts with TERT; the interaction retains TERT in the nucleus. Interacts with PECAM1 and FER. Interacts with EPHA2 (activated); participates in PTK2/FAK1 dephosphorylation in EPHA2 downstream signaling. Interacts with PDGFRA (tyrosine phosphorylated). Interacts with PDGFRB (tyrosine phosphorylated); this interaction increases the PTPN11 phosphatase activity. Interacts with ROS1; this mediates PTPN11 phosphorylation. Interacts with CEACAM1 (via cytoplasmic domain); this interaction depends on the monomer/dimer equilibrium and is phosphorylation-dependent. Interacts with MPIG6B (via ITIM motif). Interacts with SIGLEC10. Interacts with CLEC12B (via ITIM motif); this interaction triggers dephosphorylation and activation of PTPN11. Interacts (via SH2 domains) with NEDD9/CAS-L; the interaction is enhanced when NEDD9/CAS-L is tyrosine phosphorylated. Post-translationally, phosphorylated on Tyr-542 and Tyr-580 upon receptor protein tyrosine kinase activation; which creates a binding site for GRB2 and other SH2-containing proteins. Phosphorylated upon activation of the receptor-type kinase FLT3. Phosphorylated upon activation of the receptor-type kinase PDGFRA. Phosphorylated by activated PDGFRB. Expressed in brain, muscle and lung.

The protein localises to the cytoplasm. It carries out the reaction O-phospho-L-tyrosyl-[protein] + H2O = L-tyrosyl-[protein] + phosphate. Inhibited by orthovanadate, molybdate and spermidine. Its function is as follows. Acts downstream of various receptor and cytoplasmic protein tyrosine kinases to participate in the signal transduction from the cell surface to the nucleus. Positively regulates MAPK signal transduction pathway. Dephosphorylates GAB1, ARHGAP35 and EGFR. Dephosphorylates ROCK2 at 'Tyr-722' resulting in stimulation of its RhoA binding activity. Dephosphorylates CDC73. Dephosphorylates SOX9 on tyrosine residues, leading to inactivate SOX9 and promote ossification. Dephosphorylates tyrosine-phosphorylated NEDD9/CAS-L. This chain is Tyrosine-protein phosphatase non-receptor type 11 (Ptpn11), found in Rattus norvegicus (Rat).